Here is a 303-residue protein sequence, read N- to C-terminus: Ribosomal large subunit pseudouridine synthase C (303 aa).

The region spanning 11–70 (SRLDKYLKRLYPLLTQGVIEKALRQKQITVNAQKAEASLRVKGGDKIFINDKFNLPVKQP) is the S4 RNA-binding domain. The active site involves aspartate 140.

This sequence belongs to the pseudouridine synthase RluA family.

The catalysed reaction is uridine(955/2504/2580) in 23S rRNA = pseudouridine(955/2504/2580) in 23S rRNA. Its function is as follows. Responsible for synthesis of pseudouridine from uracil at positions 955, 2504 and 2580 in 23S ribosomal RNA. The polypeptide is Ribosomal large subunit pseudouridine synthase C (rluC) (Rickettsia conorii (strain ATCC VR-613 / Malish 7)).